A 346-amino-acid polypeptide reads, in one-letter code: Porin Omp2a (346 aa).

A signal peptide spans 1–22 (MNIKSLLLGSAAALVAASGAQA).

This sequence belongs to the alphaproteobacteria porin family. In terms of assembly, monomer.

The protein resides in the cell outer membrane. Functionally, forms passive diffusion pores that allow small molecular weight hydrophilic materials across the outer membrane. This Brucella ovis protein is Porin Omp2a (omp2a).